A 553-amino-acid polypeptide reads, in one-letter code: Dihydroxy-acid dehydratase (553 aa).

Position 78 (Asp-78) interacts with Mg(2+). Cys-119 is a [2Fe-2S] cluster binding site. The Mg(2+) site is built by Asp-120 and Lys-121. Lys-121 is modified (N6-carboxylysine). Residue Cys-193 coordinates [2Fe-2S] cluster. Glu-441 contacts Mg(2+). Ser-467 serves as the catalytic Proton acceptor.

The protein belongs to the IlvD/Edd family. As to quaternary structure, homodimer. Requires [2Fe-2S] cluster as cofactor. The cofactor is Mg(2+).

It carries out the reaction (2R)-2,3-dihydroxy-3-methylbutanoate = 3-methyl-2-oxobutanoate + H2O. The enzyme catalyses (2R,3R)-2,3-dihydroxy-3-methylpentanoate = (S)-3-methyl-2-oxopentanoate + H2O. The protein operates within amino-acid biosynthesis; L-isoleucine biosynthesis; L-isoleucine from 2-oxobutanoate: step 3/4. Its pathway is amino-acid biosynthesis; L-valine biosynthesis; L-valine from pyruvate: step 3/4. Its function is as follows. Functions in the biosynthesis of branched-chain amino acids. Catalyzes the dehydration of (2R,3R)-2,3-dihydroxy-3-methylpentanoate (2,3-dihydroxy-3-methylvalerate) into 2-oxo-3-methylpentanoate (2-oxo-3-methylvalerate) and of (2R)-2,3-dihydroxy-3-methylbutanoate (2,3-dihydroxyisovalerate) into 2-oxo-3-methylbutanoate (2-oxoisovalerate), the penultimate precursor to L-isoleucine and L-valine, respectively. The chain is Dihydroxy-acid dehydratase from Citrifermentans bemidjiense (strain ATCC BAA-1014 / DSM 16622 / JCM 12645 / Bem) (Geobacter bemidjiensis).